A 111-amino-acid chain; its full sequence is Probable 4-amino-4-deoxy-L-arabinose-phosphoundecaprenol flippase subunit ArnE (111 aa).

The next 3 membrane-spanning stretches (helical) occupy residues 38–58, 61–81, and 91–111; these read LWLG…LLVL, LPVG…TLAA, and PRHW…GSAA. Residues 40–109 form the EamA domain; it reads LGLALICMGA…IISGIIILGS (70 aa).

This sequence belongs to the ArnE family. Heterodimer of ArnE and ArnF.

The protein localises to the cell inner membrane. The protein operates within bacterial outer membrane biogenesis; lipopolysaccharide biosynthesis. Translocates 4-amino-4-deoxy-L-arabinose-phosphoundecaprenol (alpha-L-Ara4N-phosphoundecaprenol) from the cytoplasmic to the periplasmic side of the inner membrane. The sequence is that of Probable 4-amino-4-deoxy-L-arabinose-phosphoundecaprenol flippase subunit ArnE from Salmonella agona (strain SL483).